A 246-amino-acid polypeptide reads, in one-letter code: UDP-N-acetyl-D-mannosaminuronic acid transferase (246 aa).

Belongs to the glycosyltransferase 26 family.

The catalysed reaction is UDP-N-acetyl-alpha-D-mannosaminouronate + N-acetyl-alpha-D-glucosaminyl-di-trans,octa-cis-undecaprenyl diphosphate = beta-D-ManNAcA-(1-&gt;4)-alpha-D-GlcNAc-di-trans,octa-cis-undecaprenyl diphosphate + UDP + H(+). Its pathway is bacterial outer membrane biogenesis; enterobacterial common antigen biosynthesis. Functionally, catalyzes the synthesis of Und-PP-GlcNAc-ManNAcA (Lipid II), the second lipid-linked intermediate involved in enterobacterial common antigen (ECA) synthesis. In Escherichia coli O6:K15:H31 (strain 536 / UPEC), this protein is UDP-N-acetyl-D-mannosaminuronic acid transferase.